The sequence spans 377 residues: Gap junction gamma-1 protein (377 aa).

Residues 1-18 (MSWSFLTRLLEEINNHST) are Cytoplasmic-facing. The chain crosses the membrane as a helical span at residues 19–39 (FVGKIWLTVLIIFRIVLTAVG). The Extracellular segment spans residues 40–75 (GESIYYDEQSKFTCNTHQPGCENVCYDAFAPLSHVR). A helical membrane pass occupies residues 76-96 (FWVFQIILITTPSIMYLGFAM). Residues 97 to 174 (HRIARQPDEQ…RRIKQDGLMK (78 aa)) are Cytoplasmic-facing. A disordered region spans residues 129 to 163 (DYEEAEDNQEEDPMICEEEEPEKDSEKGDKKKHDG). The span at 131-151 (EEAEDNQEEDPMICEEEEPEK) shows a compositional bias: acidic residues. Residues 175–197 (VYVLQLLFRSVFEVGFLMGQYVL) traverse the membrane as a helical segment. Residues 198-228 (YGFEVIPFFVCSRNPCPHTVDCFVSRPTEKT) are Extracellular-facing. The helical transmembrane segment at 229–249 (IFLLIMYAVSALCLFLNLCEL) threads the bilayer. Over 250-377 (FHLGIGGIRD…GVGSREKSGL (128 aa)) the chain is Cytoplasmic. Disordered regions lie at residues 266–286 (KEIQ…HSVL) and 341–377 (AHAS…KSGL). The span at 344-362 (SRSSSPEANSIAAEQNRLN) shows a compositional bias: polar residues.

The protein belongs to the connexin family. Gamma-type subfamily. A connexon is composed of a hexamer of connexins.

It localises to the cell membrane. The protein resides in the cell junction. Its subcellular location is the gap junction. Its function is as follows. One gap junction consists of a cluster of closely packed pairs of transmembrane channels, the connexons, through which materials of low MW diffuse from one cell to a neighboring cell. In Xenopus laevis (African clawed frog), this protein is Gap junction gamma-1 protein (gjc1).